A 110-amino-acid polypeptide reads, in one-letter code: NAD(P)H-quinone oxidoreductase subunit M (110 aa).

The protein belongs to the complex I NdhM subunit family. As to quaternary structure, NDH-1 can be composed of about 15 different subunits; different subcomplexes with different compositions have been identified which probably have different functions.

Its subcellular location is the cellular thylakoid membrane. It catalyses the reaction a plastoquinone + NADH + (n+1) H(+)(in) = a plastoquinol + NAD(+) + n H(+)(out). The catalysed reaction is a plastoquinone + NADPH + (n+1) H(+)(in) = a plastoquinol + NADP(+) + n H(+)(out). Functionally, NDH-1 shuttles electrons from an unknown electron donor, via FMN and iron-sulfur (Fe-S) centers, to quinones in the respiratory and/or the photosynthetic chain. The immediate electron acceptor for the enzyme in this species is believed to be plastoquinone. Couples the redox reaction to proton translocation, and thus conserves the redox energy in a proton gradient. Cyanobacterial NDH-1 also plays a role in inorganic carbon-concentration. This Synechococcus elongatus (strain ATCC 33912 / PCC 7942 / FACHB-805) (Anacystis nidulans R2) protein is NAD(P)H-quinone oxidoreductase subunit M.